A 226-amino-acid polypeptide reads, in one-letter code: Apoptosis regulator OPG045 (226 aa).

Positions Asn32–Tyr37 are essential and sufficient to inhibit host NLRP1.

Belongs to the orthopoxvirus OPG045 family. As to quaternary structure, homodimer. Interacts with host pro-apoptotic protein BCL2L11 (via BH3 domain). Interacts with host NLRP1. Interacts with host BAK.

The protein resides in the host mitochondrion outer membrane. It is found in the host cytoplasm. Functionally, plays a role in evading host innate immune response by inhibiting host inflammasome activation. Interacts with and inhibits NLR-mediated interleukin-1 beta/IL1B production in infected cells. At the host mitochondria outer membrane, interacts with the BH3 domain of host BAK and prevents BAK from binding active BAX. In turn, host apoptosis is inhibited. The polypeptide is Apoptosis regulator OPG045 (OPG045) (Vaccinia virus (strain Western Reserve) (VACV)).